We begin with the raw amino-acid sequence, 337 residues long: Glyceraldehyde-3-phosphate dehydrogenase 1 (337 aa).

NAD(+)-binding positions include 12–13 (RI), Asp-34, and Arg-79. D-glyceraldehyde 3-phosphate is bound by residues 150–152 (SCT), Thr-181, 210–211 (TG), and Arg-233. Residue Cys-151 is the Nucleophile of the active site. Residue Asn-315 coordinates NAD(+).

This sequence belongs to the glyceraldehyde-3-phosphate dehydrogenase family. Homotetramer.

It is found in the cytoplasm. The catalysed reaction is D-glyceraldehyde 3-phosphate + phosphate + NAD(+) = (2R)-3-phospho-glyceroyl phosphate + NADH + H(+). It functions in the pathway carbohydrate degradation; glycolysis; pyruvate from D-glyceraldehyde 3-phosphate: step 1/5. The protein is Glyceraldehyde-3-phosphate dehydrogenase 1 (GPD1) of Mucor circinelloides f. lusitanicus (Mucor racemosus var. lusitanicus).